A 562-amino-acid chain; its full sequence is Potassium-transporting ATPase potassium-binding subunit (562 aa).

A run of 12 helical transmembrane segments spans residues A5–S25, A63–A83, G132–I152, L175–L195, L250–F270, Q279–M299, F327–V347, A356–V376, G379–G399, M416–L436, V483–I503, and L526–A546.

It belongs to the KdpA family. As to quaternary structure, the system is composed of three essential subunits: KdpA, KdpB and KdpC.

It is found in the cell inner membrane. Its function is as follows. Part of the high-affinity ATP-driven potassium transport (or Kdp) system, which catalyzes the hydrolysis of ATP coupled with the electrogenic transport of potassium into the cytoplasm. This subunit binds the periplasmic potassium ions and delivers the ions to the membrane domain of KdpB through an intramembrane tunnel. This chain is Potassium-transporting ATPase potassium-binding subunit, found in Pectobacterium carotovorum subsp. carotovorum (strain PC1).